The sequence spans 489 residues: Membrane-bound lytic murein transglycosylase F (489 aa).

Residues 1 to 32 (MFALTAYRLRCAAWLLATGIFLLLAGCSEAKA) form the signal peptide. The interval 33-268 (PTALERVQKE…RLKDRYYGHV (236 aa)) is non-LT domain. Residues 269–489 (DVLGYVGAYT…PEEDSGDEKL (221 aa)) form an LT domain region. Residue Glu315 is part of the active site. Positions 466–489 (AESGLHLPGVNKTRPEEDSGDEKL) are disordered. Positions 478–489 (TRPEEDSGDEKL) are enriched in basic and acidic residues.

In the N-terminal section; belongs to the bacterial solute-binding protein 3 family. The protein in the C-terminal section; belongs to the transglycosylase Slt family.

Its subcellular location is the cell outer membrane. It carries out the reaction Exolytic cleavage of the (1-&gt;4)-beta-glycosidic linkage between N-acetylmuramic acid (MurNAc) and N-acetylglucosamine (GlcNAc) residues in peptidoglycan, from either the reducing or the non-reducing ends of the peptidoglycan chains, with concomitant formation of a 1,6-anhydrobond in the MurNAc residue.. Murein-degrading enzyme that degrades murein glycan strands and insoluble, high-molecular weight murein sacculi, with the concomitant formation of a 1,6-anhydromuramoyl product. Lytic transglycosylases (LTs) play an integral role in the metabolism of the peptidoglycan (PG) sacculus. Their lytic action creates space within the PG sacculus to allow for its expansion as well as for the insertion of various structures such as secretion systems and flagella. This chain is Membrane-bound lytic murein transglycosylase F, found in Pseudomonas aeruginosa (strain UCBPP-PA14).